Reading from the N-terminus, the 64-residue chain is Small cysteine-rich protein (64 aa).

The signal sequence occupies residues 1 to 17; it reads FVCVQARQIDPEQILRT. A propeptide spanning residues 18–19 is cleaved from the precursor; sequence PE.

In terms of processing, contains 4 disulfide bonds.

The protein localises to the secreted. The protein resides in the nematocyst. This Anemonia viridis (Snakelocks anemone) protein is Small cysteine-rich protein.